Here is a 1168-residue protein sequence, read N- to C-terminus: Transcription-repair-coupling factor (1168 aa).

The region spanning 633–794 (DMQKSRPMDR…MLGVRDLSVI (162 aa)) is the Helicase ATP-binding domain. Position 646 to 653 (646 to 653 (GDVGYGKT)) interacts with ATP. Residues 747-750 (DEEQ) carry the DEEQ box motif. A Helicase C-terminal domain is found at 808-969 (VLEQNMSFIK…GFKIAMRDLN (162 aa)).

It in the N-terminal section; belongs to the UvrB family. This sequence in the C-terminal section; belongs to the helicase family. RecG subfamily.

It is found in the cytoplasm. Its function is as follows. Couples transcription and DNA repair by recognizing RNA polymerase (RNAP) stalled at DNA lesions. Mediates ATP-dependent release of RNAP and its truncated transcript from the DNA, and recruitment of nucleotide excision repair machinery to the damaged site. This is Transcription-repair-coupling factor from Staphylococcus aureus (strain Mu50 / ATCC 700699).